Consider the following 1357-residue polypeptide: Major yolk protein (1357 aa).

The signal sequence occupies residues 1–15 (MRAAILFCLVASSMA). 2 Transferrin-like domains span residues 132 to 478 (VRWC…GEVY) and 493 to 1101 (AKIC…AIVK). N-linked (GlcNAc...) asparagine glycans are attached at residues Asn-198, Asn-227, Asn-304, Asn-310, Asn-402, Asn-499, Asn-530, Asn-541, Asn-572, Asn-578, Asn-625, Asn-639, Asn-692, Asn-732, Asn-741, Asn-1035, Asn-1043, Asn-1081, Asn-1128, Asn-1208, Asn-1241, and Asn-1258.

This sequence belongs to the transferrin family. Synthesized in the intestines of the females and males and also in ovaries and testis.

Its subcellular location is the secreted. In terms of biological role, may serve the following two functions: a classical role as a yolk protein precursor and probably shuttle iron to developing germ cells. In Strongylocentrotus purpuratus (Purple sea urchin), this protein is Major yolk protein.